The chain runs to 474 residues: ATP synthase subunit beta (474 aa).

152–159 (GGAGVGKT) is an ATP binding site.

It belongs to the ATPase alpha/beta chains family. F-type ATPases have 2 components, CF(1) - the catalytic core - and CF(0) - the membrane proton channel. CF(1) has five subunits: alpha(3), beta(3), gamma(1), delta(1), epsilon(1). CF(0) has three main subunits: a(1), b(2) and c(9-12). The alpha and beta chains form an alternating ring which encloses part of the gamma chain. CF(1) is attached to CF(0) by a central stalk formed by the gamma and epsilon chains, while a peripheral stalk is formed by the delta and b chains.

Its subcellular location is the cell inner membrane. The catalysed reaction is ATP + H2O + 4 H(+)(in) = ADP + phosphate + 5 H(+)(out). In terms of biological role, produces ATP from ADP in the presence of a proton gradient across the membrane. The catalytic sites are hosted primarily by the beta subunits. The chain is ATP synthase subunit beta from Paramagnetospirillum magneticum (strain ATCC 700264 / AMB-1) (Magnetospirillum magneticum).